A 352-amino-acid polypeptide reads, in one-letter code: 4-hydroxy-3-methylbut-2-en-1-yl diphosphate synthase (flavodoxin) (352 aa).

Residues Cys262, Cys265, Cys297, and Glu304 each contribute to the [4Fe-4S] cluster site.

Belongs to the IspG family. [4Fe-4S] cluster is required as a cofactor.

It carries out the reaction (2E)-4-hydroxy-3-methylbut-2-enyl diphosphate + oxidized [flavodoxin] + H2O + 2 H(+) = 2-C-methyl-D-erythritol 2,4-cyclic diphosphate + reduced [flavodoxin]. It participates in isoprenoid biosynthesis; isopentenyl diphosphate biosynthesis via DXP pathway; isopentenyl diphosphate from 1-deoxy-D-xylulose 5-phosphate: step 5/6. In terms of biological role, converts 2C-methyl-D-erythritol 2,4-cyclodiphosphate (ME-2,4cPP) into 1-hydroxy-2-methyl-2-(E)-butenyl 4-diphosphate. This Campylobacter concisus (strain 13826) protein is 4-hydroxy-3-methylbut-2-en-1-yl diphosphate synthase (flavodoxin).